The chain runs to 400 residues: S-adenosylmethionine synthase (400 aa).

His-17 provides a ligand contact to ATP. Asp-19 is a binding site for Mg(2+). Glu-45 serves as a coordination point for K(+). Residues Glu-58 and Gln-101 each coordinate L-methionine. The interval 101–111 is flexible loop; the sequence is QSADIAMGVDQ. ATP-binding positions include 177 to 179, 244 to 245, Asp-253, 259 to 260, Ala-276, and Lys-280; these read DGK, RF, and RK. Residue Asp-253 coordinates L-methionine. Lys-284 provides a ligand contact to L-methionine.

This sequence belongs to the AdoMet synthase family. Homotetramer; dimer of dimers. It depends on Mg(2+) as a cofactor. Requires K(+) as cofactor.

The protein localises to the cytoplasm. The enzyme catalyses L-methionine + ATP + H2O = S-adenosyl-L-methionine + phosphate + diphosphate. Its pathway is amino-acid biosynthesis; S-adenosyl-L-methionine biosynthesis; S-adenosyl-L-methionine from L-methionine: step 1/1. Catalyzes the formation of S-adenosylmethionine (AdoMet) from methionine and ATP. The overall synthetic reaction is composed of two sequential steps, AdoMet formation and the subsequent tripolyphosphate hydrolysis which occurs prior to release of AdoMet from the enzyme. This chain is S-adenosylmethionine synthase, found in Bacillus velezensis (strain DSM 23117 / BGSC 10A6 / LMG 26770 / FZB42) (Bacillus amyloliquefaciens subsp. plantarum).